The following is a 318-amino-acid chain: Homeobox-leucine zipper protein ATHB-4 (318 aa).

Disordered stretches follow at residues 1–23 (MGERDDGLGLSLSLGNSQQKEPS) and 128–165 (ARGGDENEAERASCSRGGGSGGSDDEDGGNGDGSRKKL). Over residues 8-17 (LGLSLSLGNS) the composition is skewed to low complexity. A compositionally biased stretch (basic and acidic residues) spans 128–140 (ARGGDENEAERAS). Residues 160–219 (GSRKKLRLSKDQALVLEETFKEHSTLNPKQKLALAKQLNLRARQVEVWFQNRRARTKLKQ) constitute a DNA-binding region (homeobox). Residues 227–248 (LKRCCDNLTEENRRLQKEVSEL) are leucine-zipper.

It belongs to the HD-ZIP homeobox family. Class II subfamily.

The protein localises to the nucleus. Functionally, probable transcription factor. The sequence is that of Homeobox-leucine zipper protein ATHB-4 (ATHB-4) from Arabidopsis thaliana (Mouse-ear cress).